The sequence spans 31 residues: Chassatide C5 (31 aa).

The cyclopeptide (Gly-Asn) cross-link spans 1–31; that stretch reads GVIPCGESCVFIPCISSVVGCSCKNKVCYRN. 3 disulfide bridges follow: Cys5-Cys21, Cys9-Cys23, and Cys14-Cys28.

Post-translationally, this is a cyclic peptide. As to expression, expressed in pedicel, root and stem but not in leaf and fruit (at protein level).

Its function is as follows. Probably participates in a plant defense mechanism. The polypeptide is Chassatide C5 (Chassalia chartacea (Chassalia curviflora)).